The following is a 395-amino-acid chain: Elongation factor Tu (395 aa).

The 195-residue stretch at 10 to 204 (KPHVNIGTIG…AVDSYIPTPE (195 aa)) folds into the tr-type G domain. The tract at residues 19–26 (GHVDHGKT) is G1. 19 to 26 (GHVDHGKT) serves as a coordination point for GTP. Residue T26 coordinates Mg(2+). Residues 60–64 (GITIS) are G2. The interval 81 to 84 (DCPG) is G3. GTP is bound by residues 81–85 (DCPGH) and 136–139 (NKCD). The tract at residues 136–139 (NKCD) is G4. The tract at residues 174–176 (SAL) is G5.

It belongs to the TRAFAC class translation factor GTPase superfamily. Classic translation factor GTPase family. EF-Tu/EF-1A subfamily. As to quaternary structure, monomer. In terms of processing, phosphorylated on serine and/or threonine residue(s). Dephosphorylated by stp.

It localises to the cytoplasm. The enzyme catalyses GTP + H2O = GDP + phosphate + H(+). Functionally, GTP hydrolase that promotes the GTP-dependent binding of aminoacyl-tRNA to the A-site of ribosomes during protein biosynthesis. The protein is Elongation factor Tu of Listeria innocua serovar 6a (strain ATCC BAA-680 / CLIP 11262).